We begin with the raw amino-acid sequence, 136 residues long: Large ribosomal subunit protein uL16 (136 aa).

The protein belongs to the universal ribosomal protein uL16 family. As to quaternary structure, part of the 50S ribosomal subunit.

In terms of biological role, binds 23S rRNA and is also seen to make contacts with the A and possibly P site tRNAs. The protein is Large ribosomal subunit protein uL16 of Proteus mirabilis (strain HI4320).